A 301-amino-acid chain; its full sequence is GTPase Era (301 aa).

In terms of domain architecture, Era-type G spans 6-173 (KSGFVAIVGR…LEQTNANLEI (168 aa)). The segment at 14 to 21 (GRPNVGKS) is G1. Residue 14–21 (GRPNVGKS) coordinates GTP. The G2 stretch occupies residues 40-44 (QTTRN). The interval 61-64 (DTPG) is G3. GTP-binding positions include 61–65 (DTPGI) and 123–126 (NKID). The interval 123–126 (NKID) is G4. The tract at residues 152 to 154 (ISA) is G5. The region spanning 204–282 (TREEVPHSVA…FLEIWVKVQK (79 aa)) is the KH type-2 domain.

This sequence belongs to the TRAFAC class TrmE-Era-EngA-EngB-Septin-like GTPase superfamily. Era GTPase family. Monomer.

Its subcellular location is the cytoplasm. The protein resides in the cell membrane. In terms of biological role, an essential GTPase that binds both GDP and GTP, with rapid nucleotide exchange. Plays a role in 16S rRNA processing and 30S ribosomal subunit biogenesis and possibly also in cell cycle regulation and energy metabolism. The polypeptide is GTPase Era (Listeria innocua serovar 6a (strain ATCC BAA-680 / CLIP 11262)).